Consider the following 267-residue polypeptide: Dihydropteroate synthase (267 aa).

In terms of domain architecture, Pterin-binding spans Met-1 to Gln-251. Asn-11 contributes to the Mg(2+) binding site. Residues Thr-51, Asp-84, Asn-103, Asp-167, Lys-203, and Arg-239 to His-241 contribute to the (7,8-dihydropterin-6-yl)methyl diphosphate site.

The protein belongs to the DHPS family. Mg(2+) is required as a cofactor.

It catalyses the reaction (7,8-dihydropterin-6-yl)methyl diphosphate + 4-aminobenzoate = 7,8-dihydropteroate + diphosphate. The protein operates within cofactor biosynthesis; tetrahydrofolate biosynthesis; 7,8-dihydrofolate from 2-amino-4-hydroxy-6-hydroxymethyl-7,8-dihydropteridine diphosphate and 4-aminobenzoate: step 1/2. Functionally, catalyzes the condensation of para-aminobenzoate (pABA) with 6-hydroxymethyl-7,8-dihydropterin diphosphate (DHPt-PP) to form 7,8-dihydropteroate (H2Pte), the immediate precursor of folate derivatives. The polypeptide is Dihydropteroate synthase (folP) (Staphylococcus haemolyticus).